The sequence spans 1181 residues: MSLLNPVLLPPNVKAYLSQGERFIKWDDETSIASPVILRVDPKGYYLYWTYQNQEMEFLDVTSIRDTRFGKFAKIPKSQKLREVFNMDFPDNHFLLKTLTVVSGPDMVDLTFYNFVSYKENVGKDWAEDVLALAKHPMTVNAPRSTFLDKILVKLKMQLNPEGKIPVKNFFQMFPADRKRVEAALGACHLAKGKNDAINPEDFPESVYKSFLMSLCPRPEIDEIFTSYHSKAKPYMTKEHLTKFINQKQRDPRLNSLLFPPARPEQVQVLIDKYEPSGINVQRGQLSPEGMVWFLCGPENSVLAHDTLLIHQDMTQPLNHYFINSSHNTYLTAGQFSGLSSAEMYRQVLLSGCRCVELDCWKGKPPDEEPIITHGFTMTTDILFKEAIEAIAESAFKTSPYPVILSFENHVDSPRQQAKMAEYCRSMFGETLLTDPLENFPLKPGIPLPSPEDLRGKILIKNKKNQFSGPASPSKKPGGVAEGSLPSSVPVEEDTGWTAEDRTEVEEEEVVEEEEEEESGNLDEEEIKKMQSDEGTAGLEVTAYEEMSSLVNYIQPTKFISFEFSAQKNRSYVVSSFTELKAYELLSKASMQFVDYNKRQMSRVYPKGTRMDSSNYMPQMFWNAGCQMVALNFQTMDLPMQQNMALFEFNGQSGYLLKHEFMRRLDKQFNPFSVDRIDVVVATTLSITIISGQFLSERSVRTYVEVELFGLPGDPKRRYRTKLSPTANSINPVWKEEPFIFEKILMPELASLRIAVMEEGSKFLGHRIIPINALHSGYHHLCLRSESNMALTMPALFVFLEMKDYIPDTWADLTVALANPIKYFNAQDKKSVKLKGVTGSLPEKLFSGTPVASQSNGAPVSAGNGSTAPGTKATGEEATKEVTEPQTASLEELRELKGVVKLQRRHEKELRELERRGARRWEELLQRGAAQLAELQTQAAGCKLRPGKGSRKKRTLPCEETVVAPSEPHDRADPRVQELKDRLEQELQQQGEEQYRSVLKRKEQHVTEQIAKMMELAREKQAAELKTFKETSETDTKEMKKKLEAKRLERIQAMTKVTTDKVAQERLKREINNSHIQEVVQAVKQMTETLERHQEKLEERQTACLEQIQAMEKQFQEKALAEYEAKMKGLEAEVKESVRAYFKDCFPTEAEDKPERSCEASEESCPQEPLVSKADTQESRL.

The PI-PLC X-box domain maps to 312 to 463 (QDMTQPLNHY…LRGKILIKNK (152 aa)). Histidine 327 is an active-site residue. Positions 328, 357, and 359 each coordinate Ca(2+). Histidine 374 is a catalytic residue. Glutamate 408 contributes to the Ca(2+) binding site. The segment at 465 to 534 (NQFSGPASPS…EEIKKMQSDE (70 aa)) is disordered. Over residues 503-525 (TEVEEEEVVEEEEEEESGNLDEE) the composition is skewed to acidic residues. The PI-PLC Y-box domain maps to 547–663 (MSSLVNYIQP…GYLLKHEFMR (117 aa)). The region spanning 666-791 (DKQFNPFSVD…CLRSESNMAL (126 aa)) is the C2 domain. The interval 847 to 890 (SGTPVASQSNGAPVSAGNGSTAPGTKATGEEATKEVTEPQTASL) is disordered. A compositionally biased stretch (polar residues) spans 850-869 (PVASQSNGAPVSAGNGSTAP). The span at 874–883 (TGEEATKEVT) shows a compositional bias: basic and acidic residues. A coiled-coil region spans residues 893 to 940 (LRELKGVVKLQRRHEKELRELERRGARRWEELLQRGAAQLAELQTQAA). Serine 950 is modified (phosphoserine). 2 coiled-coil regions span residues 974 to 1026 (PRVQ…AELK) and 1075 to 1141 (HIQE…VRAY). Residues 1149–1181 (EAEDKPERSCEASEESCPQEPLVSKADTQESRL) are disordered. The span at 1150–1159 (AEDKPERSCE) shows a compositional bias: basic and acidic residues.

As to quaternary structure, interacts with RAC1. Forms a complex composed of at least WDR26, a G-beta:gamma unit, and PLCB2. The cofactor is Ca(2+).

The catalysed reaction is a 1,2-diacyl-sn-glycero-3-phospho-(1D-myo-inositol-4,5-bisphosphate) + H2O = 1D-myo-inositol 1,4,5-trisphosphate + a 1,2-diacyl-sn-glycerol + H(+). It carries out the reaction a 1,2-diacyl-sn-glycero-3-phospho-(1D-myo-inositol) + H2O = 1D-myo-inositol 1-phosphate + a 1,2-diacyl-sn-glycerol + H(+). Functionally, the production of the second messenger molecules diacylglycerol (DAG) and inositol 1,4,5-trisphosphate (IP3) is mediated by activated phosphatidylinositol-specific phospholipase C enzymes. In neutrophils, participates in a phospholipase C-activating N-formyl peptide-activated GPCR (G protein-coupled receptor) signaling pathway by promoting RASGRP4 activation by DAG, to promote neutrophil functional responses. The polypeptide is 1-phosphatidylinositol 4,5-bisphosphate phosphodiesterase beta-2 (Mus musculus (Mouse)).